The chain runs to 251 residues: MTPTGDWYKGGDEVGAPSACGGGSALMTLPEKNLGYKPETETNRRLRWMVGGVTILTFMALLYLVELIDQLTRHSLDNNGIRLLKTDVLWGISFAPVLHANWQHLVANTIPLLVLGFLIALAGLSRFIWVTAMVWIFGGSATWLIGNMGSSFGPTDHIGVSGLIFGWLAFLLVFGLFVRRGWDIIGCMVLFAYGGVLLGVMPVLGRCGGVSWQGHLCGAISGVVAAYLLSAPERKTRALKEAGTDSPRLKT.

Helical transmembrane passes span 48–68 (WMVG…VELI), 88–108 (VLWG…LVAN), 110–130 (IPLL…FIWV), 132–152 (AMVW…GSSF), 158–178 (IGVS…GLFV), 184–204 (IIGC…MPVL), and 209–229 (GVSW…AYLL).

It to M.tuberculosis Rv1337.

The protein localises to the cell membrane. This is an uncharacterized protein from Mycobacterium leprae (strain TN).